The chain runs to 367 residues: MATKHLFLLPGDGIGPEAMAEVKKLISAMNEKLGSGFATDEGLVGGCAYDAHGAAISDADMAKAMAADAVLFGAVGGPKWDAVPYEVRPEAGLLRLRKDMELFANLRPAICYPALAASSSLKQEVVEGLDILIVRELTGGVYFGEPKQIIDLGNGQKRGIDTQVYDTFEIERISGVAFELARTRKNHVTSMEKRNVMKSGVLWNEVVTQTHKARYADVKLDHMLADAGGMQLVRWPKQFDVIVTDNLFGDMLSDIAAMLTGSIGMLPSASLGAPDVKTKKRKALYEPVHGSAPDIAGKGIANPIAMIASFAMCLRYSFGMVDEADRLEGAIAAVLDQGLRTKDIFSPGMTEVGTVEMGDAIIAKFLG.

77 to 90 (GPKWDAVPYEVRPE) serves as a coordination point for NAD(+). Arg-97, Arg-107, Arg-135, and Asp-226 together coordinate substrate. Mg(2+)-binding residues include Asp-226, Asp-250, and Asp-254. Residue 290–302 (GSAPDIAGKGIAN) coordinates NAD(+).

Belongs to the isocitrate and isopropylmalate dehydrogenases family. LeuB type 1 subfamily. In terms of assembly, homodimer. Mg(2+) is required as a cofactor. Mn(2+) serves as cofactor.

It is found in the cytoplasm. It carries out the reaction (2R,3S)-3-isopropylmalate + NAD(+) = 4-methyl-2-oxopentanoate + CO2 + NADH. The protein operates within amino-acid biosynthesis; L-leucine biosynthesis; L-leucine from 3-methyl-2-oxobutanoate: step 3/4. Functionally, catalyzes the oxidation of 3-carboxy-2-hydroxy-4-methylpentanoate (3-isopropylmalate) to 3-carboxy-4-methyl-2-oxopentanoate. The product decarboxylates to 4-methyl-2 oxopentanoate. This Mesorhizobium japonicum (strain LMG 29417 / CECT 9101 / MAFF 303099) (Mesorhizobium loti (strain MAFF 303099)) protein is 3-isopropylmalate dehydrogenase.